Consider the following 200-residue polypeptide: ATP synthase subunit s, mitochondrial (200 aa).

A mitochondrion-targeting transit peptide spans 1-25 (MMLFGKVSQQLCGIKKLPWSCDSRY). Positions 1–61 (MMLFGKVSQQ…SEWLLRCGAM (61 aa)) are N-terminal domain. G59 serves as a coordination point for Mg(2+). LRR repeat units follow at residues 62–87 (VRYH…KYKI), 88–116 (QAID…KIRL), 117–141 (CKCH…KSIL), and 142–173 (EMEI…LSDL). T93 serves as a coordination point for Mg(2+).

Belongs to the ATP synthase subunit s family. As to quaternary structure, homotetramer. Associates with ATP synthase.

Its subcellular location is the mitochondrion. The protein localises to the mitochondrion inner membrane. Functionally, involved in regulation of mitochondrial membrane ATP synthase. Necessary for H(+) conduction of ATP synthase. Facilitates energy-driven catalysis of ATP synthesis by blocking a proton leak through an alternative proton exit pathway. This chain is ATP synthase subunit s, mitochondrial (DMAC2L), found in Macaca fascicularis (Crab-eating macaque).